A 62-amino-acid chain; its full sequence is Potassium channel toxin alpha-KTx 18.3 (62 aa).

Residues 1–26 form the signal peptide; sequence MHFSGVAFILISMVLIGSIFETTVEA. 3 disulfides stabilise this stretch: Cys34-Cys53, Cys39-Cys58, and Cys43-Cys60.

This sequence belongs to the short scorpion toxin superfamily. Potassium channel inhibitor family. Alpha-KTx 18 subfamily. As to expression, expressed by the venom gland.

It is found in the secreted. In terms of biological role, probable voltage-gated potassium channel inhibitor. This Tityus discrepans (Venezuelan scorpion) protein is Potassium channel toxin alpha-KTx 18.3.